Here is a 68-residue protein sequence, read N- to C-terminus: DNA-directed RNA polymerase subunit omega (68 aa).

The protein belongs to the RNA polymerase subunit omega family. The RNAP catalytic core consists of 2 alpha, 1 beta, 1 beta' and 1 omega subunit. When a sigma factor is associated with the core the holoenzyme is formed, which can initiate transcription.

It catalyses the reaction RNA(n) + a ribonucleoside 5'-triphosphate = RNA(n+1) + diphosphate. In terms of biological role, promotes RNA polymerase assembly. Latches the N- and C-terminal regions of the beta' subunit thereby facilitating its interaction with the beta and alpha subunits. This Trichlorobacter lovleyi (strain ATCC BAA-1151 / DSM 17278 / SZ) (Geobacter lovleyi) protein is DNA-directed RNA polymerase subunit omega.